Consider the following 433-residue polypeptide: tRNA(Ile)-lysidine synthase (433 aa).

Residue 27–32 participates in ATP binding; that stretch reads SGGLDS.

Belongs to the tRNA(Ile)-lysidine synthase family.

It localises to the cytoplasm. The catalysed reaction is cytidine(34) in tRNA(Ile2) + L-lysine + ATP = lysidine(34) in tRNA(Ile2) + AMP + diphosphate + H(+). Functionally, ligates lysine onto the cytidine present at position 34 of the AUA codon-specific tRNA(Ile) that contains the anticodon CAU, in an ATP-dependent manner. Cytidine is converted to lysidine, thus changing the amino acid specificity of the tRNA from methionine to isoleucine. The protein is tRNA(Ile)-lysidine synthase of Legionella pneumophila subsp. pneumophila (strain Philadelphia 1 / ATCC 33152 / DSM 7513).